Here is a 324-residue protein sequence, read N- to C-terminus: Olfactory receptor 4K15 (324 aa).

Residues 1 to 25 (MNETNHSRVTEFVLLGLSSSRELQP) lie on the Extracellular side of the membrane. 2 N-linked (GlcNAc...) asparagine glycosylation sites follow: Asn-2 and Asn-5. The chain crosses the membrane as a helical span at residues 26–49 (FLFLTFSLLYLAILLGNFLIILTV). Residues 50–57 (TSDSRLHT) are Cytoplasmic-facing. Residues 58–79 (PMYFLLANLSFIDVCVASFATP) traverse the membrane as a helical segment. Over 80-100 (KMIADFLVERKTISFDACLAQ) the chain is Extracellular. A disulfide bond links Cys-97 and Cys-189. Residues 101–120 (IFFVHLFTGSEMVLLVSMAY) form a helical membrane-spanning segment. Topologically, residues 121–139 (DRYVAICKPLHYMTVMSRR) are cytoplasmic. A helical transmembrane segment spans residues 140–158 (VCVVLVLISWFVGFIHTTS). Residues 159–195 (QLAFTVNLPFCGPNKVDSFFCDLPLVTKLACIDTYVV) are Extracellular-facing. A helical transmembrane segment spans residues 196–219 (SLLIVADSGFLSLSSFLLLVVSYT). The Cytoplasmic segment spans residues 220 to 235 (VILVTVRNRSSASMAK). The chain crosses the membrane as a helical span at residues 236–258 (ARSTLTAHITVVTLFFGPCIFIY). Residues 259–269 (VWPFSSYSVDK) lie on the Extracellular side of the membrane. The helical transmembrane segment at 270–289 (VLAVFYTIFTLILNPVIYTL) threads the bilayer. Residues 290-324 (RNKEVKAAMSKLKSRYLKPSQVSVVIRNVLFLETK) lie on the Cytoplasmic side of the membrane.

This sequence belongs to the G-protein coupled receptor 1 family.

It localises to the cell membrane. Odorant receptor. This Homo sapiens (Human) protein is Olfactory receptor 4K15 (OR4K15).